The sequence spans 276 residues: Diaminopimelate epimerase (276 aa).

Substrate is bound by residues Asn-11, Gln-44, and Asn-64. Cys-73 functions as the Proton donor in the catalytic mechanism. Residues 74-75 (GN), Asn-157, Asn-190, and 208-209 (ER) contribute to the substrate site. Residue Cys-217 is the Proton acceptor of the active site. 218-219 (GS) provides a ligand contact to substrate.

This sequence belongs to the diaminopimelate epimerase family. In terms of assembly, homodimer.

It localises to the cytoplasm. It catalyses the reaction (2S,6S)-2,6-diaminopimelate = meso-2,6-diaminopimelate. The protein operates within amino-acid biosynthesis; L-lysine biosynthesis via DAP pathway; DL-2,6-diaminopimelate from LL-2,6-diaminopimelate: step 1/1. In terms of biological role, catalyzes the stereoinversion of LL-2,6-diaminopimelate (L,L-DAP) to meso-diaminopimelate (meso-DAP), a precursor of L-lysine and an essential component of the bacterial peptidoglycan. This is Diaminopimelate epimerase from Blochmanniella floridana.